Here is a 391-residue protein sequence, read N- to C-terminus: MVAAKTIKTLVWKSELPDNIKEELYNKLIEYNKKYKLKKAEVEAIIEDAVNEYRKALVEPGEPIGTVAAQSIGEPSTQMTLNTFHYAGVAEINVTLGLPRIIEIVDARKNPSTPVMTVFLDEEHRYDLEKAREVARRIEGTTIENLAREMSIDILNFEFIVEIDPERLEKSGLDMERILKKLSGSFKSAEFEAEGYSLIVRPKKVTKLSDLRKLAEKVKKHRLKGLSGVGKTIIRKEGDEYVIYTEGSNFKQVLKVPGVDPTRTRTNNIWEIADVLGIEAARNAIIEEIVNTMREQGLEVDIRHIMLVADMMTLDGVIRPIGRHGIVGEKSSVLARAAFEITTQHLFEAAERGEVDPLNGVVENVLIGQPVPVGTGIVKLTMNLPLRPQRE.

The protein belongs to the RNA polymerase beta' chain family. Part of the RNA polymerase complex.

Its subcellular location is the cytoplasm. It catalyses the reaction RNA(n) + a ribonucleoside 5'-triphosphate = RNA(n+1) + diphosphate. Functionally, DNA-dependent RNA polymerase (RNAP) catalyzes the transcription of DNA into RNA using the four ribonucleoside triphosphates as substrates. Forms part of the jaw domain. The sequence is that of DNA-directed RNA polymerase subunit Rpo1C from Thermococcus gammatolerans (strain DSM 15229 / JCM 11827 / EJ3).